The chain runs to 718 residues: MAAPPGEAPLTAATNIEPFYVLHKGGAAASSSSSSAPSLPSSGRARRRIDVSGLASPNPKPGKRSRDDDAAEDDDDDELYERLRLDAFHRVWSKIQSTINEVLRGISLKLFDQVLRWVQESFSAVRSIARPSAAEVRQPYPLLTDVICRKIPTAFVLTKNAEFVDDITTFRDLAEYLESNGCHLAKLSATELSEKNGVGCCFRSLLRQLLSDVPDVADIFALASWYSAAENYDQPIVVVIDDLEQCSGDVLGELVMMLSEWVIKIPIFFVMGIATTLDAPRKLLSSEDLQRLEPCKLTLGSPSDRMNALVEAILVKPCAGFCISHEVAVFLRNYFFKHDGTITSFISALKLACSKHFSVEPLSFLCMGMLEEDRENFWHDKFNALPQELRKYASGLPSCTREKDSTKSGDNMVDGLSELMNIQKDWSSVLLCLYEAGKHGKVQLLDIFCEAVNPDLHTQKAPNLPNEKSGTSRRFIDQVMDTIRYLPVETLFCLLEVWSIHLNGMDKITNKVKELQSTTISTDSVRITKDKWPRRSTNSTGNSTVALNDKVAMLLDDVTRKFLVSVECLPFHEIVCFKNVSILQSALIGNPRRMVQLDLVKSHKHLKCSCCRKNGIAVLASMHDTSIMCNLAQEYGDVINLHDWYISFDGIINSVHSKIKRKPHTSPSKKKSKPVAAESEAMIQARFCRAVTELQITGLLRMPSKRRPDLVQRIAFGL.

Over residues 26 to 43 (GAAASSSSSSAPSLPSSG) the composition is skewed to low complexity. Residues 26–75 (GAAASSSSSSAPSLPSSGRARRRIDVSGLASPNPKPGKRSRDDDAAEDDD) form a disordered region. The Nuclear localization signal signature appears at 659 to 666 (IKRKPHTS).

Belongs to the ORC3 family. In terms of assembly, component of the origin recognition complex (ORC) composed of at least ORC1, ORC2, ORC3, ORC4, ORC5 and ORC6. ORC is regulated in a cell-cycle and development dependent manner. It is sequentially assembled at the exit from anaphase of mitosis and disassembled as cells enter S phase. As to expression, expressed at low levels in the shoot apical meristem (SAM), leaves, ears and roots (including root tips).

Its subcellular location is the nucleus. Its function is as follows. Component of the origin recognition complex (ORC) that binds origins of replication. DNA-binding is ATP-dependent. The specific DNA sequences that define origins of replication have not been identified yet. This chain is Origin of replication complex subunit 3, found in Oryza sativa subsp. japonica (Rice).